Here is a 276-residue protein sequence, read N- to C-terminus: MLMITSFANPRVAQAFVDYMATQGVILTIQQHNQSDIWLADESQAERVRVELARFIENPGDPRYLAASWQSGQTNSGLRYRRFPFLATLRERAGPVTWIVMLACVLVYIAMSLIGDQTVMVWLAWPFDPVLKFEVWRYFTHIFMHFSLMHILFNLLWWWYLGGAVEKRLGSGKLIVITVISALLSGYVQQKFSGPWFGGLSGVVYALMGYVWLRGERDPQSGIYLQRGLIIFALLWIVAGWFDWFGMSMANGAHIAGLIVGLAMAFVDTLNARKRT.

6 consecutive transmembrane segments (helical) span residues 94–114, 142–162, 169–189, 192–212, 229–249, and 250–270; these read GPVT…MSLI, IFMH…WYLG, LGSG…GYVQ, FSGP…GYVW, LIIF…GMSM, and ANGA…VDTL. The Nucleophile role is filled by Ser201. The active site involves His254.

The protein belongs to the peptidase S54 family.

The protein resides in the cell inner membrane. The catalysed reaction is Cleaves type-1 transmembrane domains using a catalytic dyad composed of serine and histidine that are contributed by different transmembrane domains.. Its function is as follows. Rhomboid-type serine protease that catalyzes intramembrane proteolysis. In Salmonella agona (strain SL483), this protein is Rhomboid protease GlpG.